Here is a 311-residue protein sequence, read N- to C-terminus: Aspartate carbamoyltransferase catalytic subunit (311 aa).

The carbamoyl phosphate site is built by Arg-55 and Thr-56. Lys-85 contributes to the L-aspartate binding site. The carbamoyl phosphate site is built by Arg-106, His-135, and Gln-138. The L-aspartate site is built by Arg-168 and Arg-230. Carbamoyl phosphate contacts are provided by Leu-268 and Pro-269.

The protein belongs to the aspartate/ornithine carbamoyltransferase superfamily. ATCase family. Heterododecamer (2C3:3R2) of six catalytic PyrB chains organized as two trimers (C3), and six regulatory PyrI chains organized as three dimers (R2).

It catalyses the reaction carbamoyl phosphate + L-aspartate = N-carbamoyl-L-aspartate + phosphate + H(+). It functions in the pathway pyrimidine metabolism; UMP biosynthesis via de novo pathway; (S)-dihydroorotate from bicarbonate: step 2/3. Functionally, catalyzes the condensation of carbamoyl phosphate and aspartate to form carbamoyl aspartate and inorganic phosphate, the committed step in the de novo pyrimidine nucleotide biosynthesis pathway. This chain is Aspartate carbamoyltransferase catalytic subunit, found in Proteus mirabilis (strain HI4320).